We begin with the raw amino-acid sequence, 99 residues long: Aspartyl/glutamyl-tRNA(Asn/Gln) amidotransferase subunit C (99 aa).

This sequence belongs to the GatC family. Heterotrimer of A, B and C subunits.

The catalysed reaction is L-glutamyl-tRNA(Gln) + L-glutamine + ATP + H2O = L-glutaminyl-tRNA(Gln) + L-glutamate + ADP + phosphate + H(+). It catalyses the reaction L-aspartyl-tRNA(Asn) + L-glutamine + ATP + H2O = L-asparaginyl-tRNA(Asn) + L-glutamate + ADP + phosphate + 2 H(+). Allows the formation of correctly charged Asn-tRNA(Asn) or Gln-tRNA(Gln) through the transamidation of misacylated Asp-tRNA(Asn) or Glu-tRNA(Gln) in organisms which lack either or both of asparaginyl-tRNA or glutaminyl-tRNA synthetases. The reaction takes place in the presence of glutamine and ATP through an activated phospho-Asp-tRNA(Asn) or phospho-Glu-tRNA(Gln). This Paraburkholderia phytofirmans (strain DSM 17436 / LMG 22146 / PsJN) (Burkholderia phytofirmans) protein is Aspartyl/glutamyl-tRNA(Asn/Gln) amidotransferase subunit C.